We begin with the raw amino-acid sequence, 468 residues long: Serine--tRNA ligase (468 aa).

Residue 272-274 participates in L-serine binding; that stretch reads TAE. 303-305 serves as a coordination point for ATP; the sequence is RAE. E326 contacts L-serine. 390–393 contacts ATP; the sequence is EISS. S426 lines the L-serine pocket.

This sequence belongs to the class-II aminoacyl-tRNA synthetase family. Type-1 seryl-tRNA synthetase subfamily. Homodimer. The tRNA molecule binds across the dimer.

It is found in the cytoplasm. It carries out the reaction tRNA(Ser) + L-serine + ATP = L-seryl-tRNA(Ser) + AMP + diphosphate + H(+). It catalyses the reaction tRNA(Sec) + L-serine + ATP = L-seryl-tRNA(Sec) + AMP + diphosphate + H(+). Its pathway is aminoacyl-tRNA biosynthesis; selenocysteinyl-tRNA(Sec) biosynthesis; L-seryl-tRNA(Sec) from L-serine and tRNA(Sec): step 1/1. Catalyzes the attachment of serine to tRNA(Ser). Is also able to aminoacylate tRNA(Sec) with serine, to form the misacylated tRNA L-seryl-tRNA(Sec), which will be further converted into selenocysteinyl-tRNA(Sec). This is Serine--tRNA ligase from Xanthobacter autotrophicus (strain ATCC BAA-1158 / Py2).